The following is a 655-amino-acid chain: Phosphatidylinositol-3,5-bisphosphate 3-phosphatase MTMR6 (655 aa).

Positions 1-101 (MEHIRTTKVE…YNSLLQLSKQ (101 aa)) constitute a GRAM domain. Positions 2 to 141 (EHIRTTKVEQ…AEYERMGVPN (140 aa)) are interaction with RAB1B. A Phosphotyrosine modification is found at Y108. Residues 124–537 (GWQLIDLAAE…FNFKFWRNMY (414 aa)) enclose the Myotubularin phosphatase domain. Residues N286, N311, and I312 each coordinate a 1,2-diacyl-sn-glycero-3-phospho-(1D-myo-inositol-3,5-bisphosphate). Positions 286, 311, and 312 each coordinate a 1,2-diacyl-sn-glycero-3-phospho-(1D-myo-inositol-3-phosphate). The active-site Phosphocysteine intermediate is C374. The a 1,2-diacyl-sn-glycero-3-phospho-(1D-myo-inositol-3,5-bisphosphate) site is built by S375, D376, G377, W378, D379, R380, K416, and R420. Positions 375, 376, 377, 378, 379, and 380 each coordinate a 1,2-diacyl-sn-glycero-3-phospho-(1D-myo-inositol-3-phosphate). R420 lines the a 1,2-diacyl-sn-glycero-3-phospho-(1D-myo-inositol-3-phosphate) pocket. Residues 547–581 (RQSVLNIIMNMNEQNKQLEEDVKDLEAKIKQCKSG) adopt a coiled-coil conformation. A phosphoserine mark is found at S595, S623, and S645.

The protein belongs to the protein-tyrosine phosphatase family. Non-receptor class myotubularin subfamily. As to quaternary structure, homodimer. Heterodimer (via C-terminus) with MTMR9 (via C-terminus). Interacts with ALKBH4. Interacts with KCNN4. Interacts (via GRAM domain) with RAB1B (in GDP-bound form); the interaction regulates MTMR6 recruitment to the endoplasmic reticulum-Golgi intermediate compartment.

Its subcellular location is the cytoplasm. It is found in the endoplasmic reticulum. The protein resides in the cell projection. It localises to the ruffle membrane. The protein localises to the endoplasmic reticulum-Golgi intermediate compartment. Its subcellular location is the perinuclear region. It catalyses the reaction a 1,2-diacyl-sn-glycero-3-phospho-(1D-myo-inositol-3,5-bisphosphate) + H2O = a 1,2-diacyl-sn-glycero-3-phospho-(1D-myo-inositol-5-phosphate) + phosphate. The catalysed reaction is a 1,2-diacyl-sn-glycero-3-phospho-(1D-myo-inositol-3-phosphate) + H2O = a 1,2-diacyl-sn-glycero-3-phospho-(1D-myo-inositol) + phosphate. It carries out the reaction 1,2-dioctanoyl-sn-glycero-3-phospho-(1D-myo-inositol-3,5-bisphosphate) + H2O = 1,2-dioctanoyl-sn-glycero-3-phospho-(1D-myo-inositol-5-phosphate) + phosphate. The enzyme catalyses 1,2-dioctanoyl-sn-glycero-3-phospho-(1-D-myo-inositol-3-phosphate) + H2O = 1,2-dioctanoyl-sn-glycero-3-phospho-(1D-myo-inositol) + phosphate. With respect to regulation, allosterically activated by phosphatidylserine and/or phosphatidylinositol 4-phosphate (PtdIns(4)P), and phosphatidylinositol 5-phosphate (PtdIns(5)P). Interaction with MTMR9 increases catalytic activity towards phosphatidylinositol 3,5-bisphosphate. In terms of biological role, lipid phosphatase that specifically dephosphorylates the D-3 position of phosphatidylinositol 3-phosphate and phosphatidylinositol 3,5-bisphosphate, generating phosphatidylinositol and phosphatidylinositol 5-phosphate. Binds with high affinity to phosphatidylinositol 3,5-bisphosphate (PtdIns(3,5)P2) but also to phosphatidylinositol 3-phosphate (PtdIns(3)P), phosphatidylinositol 4-phosphate (PtdIns(4)P), and phosphatidylinositol 5-phosphate (PtdIns(5)P), phosphatidic acid and phosphatidylserine. Negatively regulates ER-Golgi protein transport. Probably in association with MTMR9, plays a role in the late stages of macropinocytosis by dephosphorylating phosphatidylinositol 3-phosphate in membrane ruffles. Acts as a negative regulator of KCNN4/KCa3.1 channel activity in CD4(+) T-cells possibly by decreasing intracellular levels of phosphatidylinositol 3-phosphate. Negatively regulates proliferation of reactivated CD4(+) T-cells. In complex with MTMR9, negatively regulates DNA damage-induced apoptosis. The formation of the MTMR6-MTMR9 complex stabilizes both MTMR6 and MTMR9 protein levels. The sequence is that of Phosphatidylinositol-3,5-bisphosphate 3-phosphatase MTMR6 from Rattus norvegicus (Rat).